Here is a 1907-residue protein sequence, read N- to C-terminus: Chromatin modification-related protein EAF1 B (1907 aa).

Disordered stretches follow at residues 108 to 208 (ASPH…TDLV), 261 to 287 (NRVSSNSLNTKVDGEPVVRESTAGSKT), 323 to 373 (GGSP…SHAN), and 449 to 469 (NQSHRSTAEMQTKEKSSETEK). Basic and acidic residues predominate over residues 140–151 (SENKSVEGERNL). Composition is skewed to polar residues over residues 261-270 (NRVSSNSLNT), 333-342 (GQKNSSTQLN), and 355-372 (TNRGATGTNGLESESSHA). The HSA domain occupies 563 to 641 (CGTAPVEVRE…LSYAILQFWS (79 aa)). Disordered stretches follow at residues 836-909 (SSSL…AVQK) and 928-952 (AETSGKPKKKKKTHQGSAYDQTWHL). The span at 856–866 (RRVRTASRHRV) shows a compositional bias: basic residues. Composition is skewed to polar residues over residues 884 to 898 (TDASSGDTSSFQDEY) and 942 to 952 (QGSAYDQTWHL). An SANT domain is found at 1049–1105 (SGNPWSLFEDQALVVLVHDMGPNWELISDAMNSTLKIKYIYRNPTECKDRHKILMDK). 8 disordered regions span residues 1107-1131 (AGDGADSAEDSGNSQSYPSTLPGIP), 1235-1266 (PVLPTSGAHPSTPGSSGVVLSNNLPTTSGLQS), 1296-1319 (LSGRNLQQPSLSTPAAVSGSDRGH), 1429-1465 (GHLSQQHQMSPQSHVLGNSHHPHLQSPSQATGAQQEA), 1477-1594 (YLQQ…QQLN), 1638-1703 (VRPD…SPAT), 1767-1791 (VPQSVTNTTQTASMGTTKGMPQASN), and 1824-1907 (VNNS…TKVE). Composition is skewed to polar residues over residues 1116–1125 (DSGNSQSYPS), 1242–1266 (AHPSTPGSSGVVLSNNLPTTSGLQS), 1296–1310 (LSGRNLQQPSLSTPA), 1431–1444 (LSQQHQMSPQSHVL), and 1453–1462 (QSPSQATGAQ). Residues 1493–1512 (PHVQQPQGSSVSSSSQNSPQ) are compositionally biased toward low complexity. Residues 1513–1529 (TQPPVSPQPLSMPPVSP) show a composition bias toward pro residues. 8 stretches are compositionally biased toward polar residues: residues 1532-1545 (NINAMAQQKPQKSQ), 1554-1568 (SPQSGTSGVNNQAGK), 1585-1594 (RQPTQGQQLN), 1640-1655 (PDQQSSVGTTTSTDLQ), 1662-1672 (PLSSNHSQQLP), 1681-1703 (PSPQQQMQLHSDNSIQGQSSPAT), 1769-1782 (QSVTNTTQTASMGT), and 1824-1844 (VNNSNTDSAGNDPVSTPNQGL). 2 stretches are compositionally biased toward basic and acidic residues: residues 1863–1872 (SEEKRPKLPE) and 1882–1892 (LASEEQPHLEE).

The protein belongs to the EAF1 family. Component of the NuA4 histone acetyltransferase complex. Interacts with ARP4 and SWC4, and (via HSA domain) with TAF14 and TAF14B. In terms of tissue distribution, expressed in leaves.

Its subcellular location is the nucleus. Functionally, component of the NuA4 histone acetyltransferase complex which is involved in transcriptional activation of selected genes principally by acetylation of nucleosomal histone H4 and H2A. The protein is Chromatin modification-related protein EAF1 B (EAF1B) of Arabidopsis thaliana (Mouse-ear cress).